A 149-amino-acid polypeptide reads, in one-letter code: Small ribosomal subunit protein uS13 (149 aa).

The protein belongs to the universal ribosomal protein uS13 family. As to quaternary structure, part of the 30S ribosomal subunit. Forms a loose heterodimer with protein S19. Forms two bridges to the 50S subunit in the 70S ribosome.

In terms of biological role, located at the top of the head of the 30S subunit, it contacts several helices of the 16S rRNA. In the 70S ribosome it contacts the 23S rRNA (bridge B1a) and protein L5 of the 50S subunit (bridge B1b), connecting the 2 subunits; these bridges are implicated in subunit movement. The chain is Small ribosomal subunit protein uS13 from Thermococcus kodakarensis (strain ATCC BAA-918 / JCM 12380 / KOD1) (Pyrococcus kodakaraensis (strain KOD1)).